Reading from the N-terminus, the 147-residue chain is Transcriptional regulator MraZ (147 aa).

2 consecutive SpoVT-AbrB domains span residues 6 to 48 and 77 to 120; these read NFER…NSEE and TVEV…SKAK.

Belongs to the MraZ family. In terms of assembly, forms oligomers.

The protein localises to the cytoplasm. It is found in the nucleoid. The chain is Transcriptional regulator MraZ from Mycoplasmopsis pulmonis (strain UAB CTIP) (Mycoplasma pulmonis).